The sequence spans 345 residues: Phosphoribosylformylglycinamidine cyclo-ligase (345 aa).

This sequence belongs to the AIR synthase family.

Its subcellular location is the cytoplasm. It carries out the reaction 2-formamido-N(1)-(5-O-phospho-beta-D-ribosyl)acetamidine + ATP = 5-amino-1-(5-phospho-beta-D-ribosyl)imidazole + ADP + phosphate + H(+). Its pathway is purine metabolism; IMP biosynthesis via de novo pathway; 5-amino-1-(5-phospho-D-ribosyl)imidazole from N(2)-formyl-N(1)-(5-phospho-D-ribosyl)glycinamide: step 2/2. The sequence is that of Phosphoribosylformylglycinamidine cyclo-ligase from Limosilactobacillus reuteri (strain DSM 20016) (Lactobacillus reuteri).